We begin with the raw amino-acid sequence, 278 residues long: Short-chain dehydrogenase/reductase eupG (278 aa).

NADP(+) is bound by residues L19, D71, and N98. S155 acts as the Proton donor in catalysis. NADP(+)-binding residues include Y188, K192, and T223. Y188 serves as the catalytic Proton acceptor. K192 (lowers pKa of active site Tyr) is an active-site residue.

It belongs to the short-chain dehydrogenases/reductases (SDR) family.

The protein operates within secondary metabolite biosynthesis; terpenoid biosynthesis. Functionally, short-chain dehydrogenase/reductase; part of the gene cluster that mediates the biosynthesis of eupenifeldin, a bistropolone meroterpenoid that acts as an antitumor agent. The first step of eupenifeldin biosynthesis is the biosynthesis of 3-methylorcinaldehyde performed by the non-reducing polyketide synthase eupA. Oxidative dearomatization of 3-methylorcinaldehyde likely catalyzed by the FAD-dependent monooxygenase eupB is followed by oxidative ring expansion by the 2-oxoglutarate-dependent dioxygenase eupC to provide the first tropolone metabolite, tropolone stipitaldehyde. In parallel, generation of sesquiterpene alpha-humulene from farnesylpyrophosphate (FPP) is catalyzed by the terpene cyclase eupE. The cytochrome P450 monooxygenase eupD then hydroxylates humulene to humulenol. The putative Diels-Alderase eupF probably catalyzes the formation of the tropolone-humulene skeleton by linking humulenol and the polyketide moiety. The short-chain dehydrogenase/reductase eupG and the flavin-dependent monooxygenase eupH are also essential for eupenifeldin biosynthesis and are likely the additional decorating enzymes of the tropolone-humulene skeleton to produce final eupenifeldin or derivatives. This chain is Short-chain dehydrogenase/reductase eupG, found in Phoma sp.